A 391-amino-acid chain; its full sequence is Ammonium transporter Amt1 (391 aa).

10 helical membrane-spanning segments follow: residues 12-32 (VFFF…FIAL), 51-71 (LDLA…SYGF), 88-108 (AWWM…TGGV), 112-132 (IKIL…YPIV), 152-172 (AGSG…AYVL), 192-212 (IPIA…FNIG), 223-243 (LASV…GGAL), 261-281 (VAVC…VGLL), 305-325 (IGPV…IPFL), and 338-358 (GQII…LIIY).

Belongs to the ammonia transporter channel (TC 1.A.11.2) family. As to quaternary structure, homotrimer. Interacts and forms a complex with GlnK1.

It is found in the cell membrane. Its activity is regulated as follows. Activity is regulated by the nitrogen regulatory protein GlnK1 via direct interaction. Formation of the GlnK1/Amt1 complex is decreased in the presence of Mg-ATP or 2-oxoglutarate. The presence of both effectors abolishes the formation of the complex. Involved in the uptake of ammonium/ammonia (NH(4)(+)/NH(3)). Transport is electrogenic. The polypeptide is Ammonium transporter Amt1 (Methanocaldococcus jannaschii (strain ATCC 43067 / DSM 2661 / JAL-1 / JCM 10045 / NBRC 100440) (Methanococcus jannaschii)).